The sequence spans 591 residues: 4-coumarate--CoA ligase-like 3 (591 aa).

Positions 228, 229, 230, 231, 232, and 236 each coordinate ATP. Tyr-280 contributes to the (E)-4-coumaroyl-AMP binding site. Residue Arg-301 coordinates CoA. Residues 303–375 (DAGDAVAAIG…QAFPHVDFIQ (73 aa)) form an SBD1 region. The (E)-4-coumaroyl-AMP site is built by Ala-353, Gln-375, Gly-376, and Thr-380. Residues Gln-375, Gly-376, Thr-380, Asp-459, and Arg-474 each coordinate ATP. Residues 376 to 440 (GYGMTESTAV…LHGPGIMKGY (65 aa)) are SBD2. Positions 476 and 480 each coordinate (E)-4-coumaroyl-AMP. Lys-482 and Gly-483 together coordinate CoA. Lys-565 lines the ATP pocket.

The protein belongs to the ATP-dependent AMP-binding enzyme family. The cofactor is Mg(2+).

It catalyses the reaction (E)-4-coumarate + ATP + CoA = (E)-4-coumaroyl-CoA + AMP + diphosphate. The enzyme catalyses (E)-4-coumarate + ATP + H(+) = (E)-4-coumaroyl-AMP + diphosphate. It carries out the reaction (E)-4-coumaroyl-AMP + CoA = (E)-4-coumaroyl-CoA + AMP + H(+). Functionally, carboxylate--CoA ligase that may use 4-coumarate as substrate. Follows a two-step reaction mechanism, wherein the carboxylate substrate first undergoes adenylation by ATP, followed by a thioesterification in the presence of CoA to yield the final CoA thioester. The polypeptide is 4-coumarate--CoA ligase-like 3 (4CLL3) (Oryza sativa subsp. japonica (Rice)).